The primary structure comprises 789 residues: MPSSFFFEDASDDELELIRNQEDSSEEDVKEGEAEEHEAGEDEDGEEEYEEEDDDEEEEDEKRKRDADAQSPWDFASYSSSVGEEHARRHTTSIDEKISKAIQHRPVPISINEEEEEEEEEEDASDAETDKQEEYLSEDDEAAEYKPEDATPKPFFSTVDGVSFHADTFMELNLSRPLLRACETLGYKKPTPIQAACIPLALTGRDLCASAITGSGKTAAFALPTLERLLFRPKRVFATRVLILTPTRELAVQIHSMIQNLAQFTDIKCGLIVGGLSVREQEVVLRSMPDIVVATPGRMIDHLRNSMSVDLDDLAVLILDEADRLLQTGFATEITELVRLCPKRRQTMLFSATMTEEVKELVKLSLNKPLRLSADPSARRPPGLTEEVVRIRRTREANQEAVLLSLCTRTFKSKVIIFSGTKQAAHRLKILFGLAGLKAAELHGNLTQAQRLDSLELFRKQEVDFLIATDVAARGLDIIGVQTVINYACPREIDSYVHRVGRTARAGREGYAVTFVTDSDRSLLKVIAKKVGSKLKSRVIPEQSIVKWSQIIDEMEDQYSAVISAERDERALRKAEMEFAKAENMLEHRDEIYARPKRTWFMTEKEKKLVAQAEKDSAGNPAGGELVSADRAEDLKMKEKRKREREKNLPRKKRRKLEAAREMLEDNEGEEEEEDEEGDEKRGRSRGKDKKKQETDKKGLTLKDLGYMRAKAVKAKQRAIDSGKMERPKPDKKQSRSKPRNQPRGEEMKDLFKSDMGEKKQGRGGAAAAAKPRTKSKNSFKSKARYKRR.

The segment at 1–152 (MPSSFFFEDA…AEYKPEDATP (152 aa)) is disordered. Residues 13–66 (DELELIRNQEDSSEEDVKEGEAEEHEAGEDEDGEEEYEEEDDDEEEEDEKRKRD) are a coiled coil. The segment covering 23–60 (DSSEEDVKEGEAEEHEAGEDEDGEEEYEEEDDDEEEED) has biased composition (acidic residues). Basic and acidic residues predominate over residues 83 to 99 (GEEHARRHTTSIDEKIS). Residues 110–135 (SINEEEEEEEEEEDASDAETDKQEEY) adopt a coiled-coil conformation. Residues 112–127 (NEEEEEEEEEEDASDA) are compositionally biased toward acidic residues. Positions 167-195 (DTFMELNLSRPLLRACETLGYKKPTPIQA) match the Q motif motif. In terms of domain architecture, Helicase ATP-binding spans 198–372 (IPLALTGRDL…KLSLNKPLRL (175 aa)). Position 211–218 (211–218 (AITGSGKT)) interacts with ATP. Residues 320-323 (DEAD) carry the DEAD box motif. One can recognise a Helicase C-terminal domain in the interval 402-546 (VLLSLCTRTF…SRVIPEQSIV (145 aa)). 2 coiled-coil regions span residues 563 to 591 (ISAE…HRDE) and 628 to 677 (SADR…EDEE). The disordered stretch occupies residues 611-789 (AQAEKDSAGN…FKSKARYKRR (179 aa)). Positions 628–637 (SADRAEDLKM) are enriched in basic and acidic residues. Residues 638-656 (KEKRKREREKNLPRKKRRK) are compositionally biased toward basic residues. Residues 665 to 678 (EDNEGEEEEEDEEG) show a composition bias toward acidic residues. 3 stretches are compositionally biased toward basic and acidic residues: residues 691–701 (KKQETDKKGLT), 718–734 (RAID…DKKQ), and 743–761 (PRGE…EKKQ). Basic residues predominate over residues 772–789 (PRTKSKNSFKSKARYKRR).

This sequence belongs to the DEAD box helicase family. DDX27/DRS1 subfamily.

The catalysed reaction is ATP + H2O = ADP + phosphate + H(+). This Arabidopsis thaliana (Mouse-ear cress) protein is DEAD-box ATP-dependent RNA helicase 28 (RH28).